The primary structure comprises 555 residues: Glypican-6 (555 aa).

An N-terminal signal peptide occupies residues 1-23; it reads MPSWIGAVILPLLGLLLSLPAGA. Residues 348–357 show a composition bias toward low complexity; the sequence is PALRSARSAP. 2 disordered regions span residues 348–376 and 480–501; these read PALR…PTTA and GNDV…GSGC. Ser-529 carries GPI-anchor amidated serine lipidation. A propeptide spans 530–555 (removed in mature form); that stretch reads SAAQRGHSLLSWSLTCIVLALQRLCR.

It belongs to the glypican family. As to expression, widely expressed. High expression in fetal kidney and lung and lower expressions in fetal liver and brain. In adult tissues, very abundant in ovary, high levels also observed in liver, kidney, small intestine and colon. Not detected in peripheral blood leukocytes. Detected in breast cancer cells (at protein level).

The protein localises to the cell membrane. It localises to the secreted. It is found in the extracellular space. In terms of biological role, cell surface proteoglycan that bears heparan sulfate. Putative cell surface coreceptor for growth factors, extracellular matrix proteins, proteases and anti-proteases. Enhances migration and invasion of cancer cells through WNT5A signaling. The protein is Glypican-6 (GPC6) of Homo sapiens (Human).